A 620-amino-acid polypeptide reads, in one-letter code: Alkaline nuclease (620 aa).

A compositionally biased stretch (low complexity) spans 1–10 (MAAAATPGAK). Disordered stretches follow at residues 1–122 (MAAA…SASA) and 595–620 (ASRS…RSSR). Over residues 11–23 (RPADPARDPDSPP) the composition is skewed to basic and acidic residues. Residues 40-49 (RPAPPRPTSP) are compositionally biased toward pro residues. Residues 603 to 620 (PAAADTTSSPPTAGRSSR) are compositionally biased toward low complexity.

The protein belongs to the herpesviridae alkaline nuclease family. As to quaternary structure, interacts with major DNA-binding protein; this interaction increases the nuclease processivity of the alkaline exonuclease.

It localises to the host nucleus. Its subcellular location is the host cytoplasm. Functionally, plays a role in processing non linear or branched viral DNA intermediates in order to promote the production of mature packaged unit-length linear progeny viral DNA molecules. Exhibits endonuclease and exonuclease activities and accepts both double-stranded and single-stranded DNA as substrate. Exonuclease digestion of DNA is in the 5'-&gt; 3' direction and the products are 5'-monophosphate nucleosides. Additionally, forms a recombinase with the major DNA-binding protein, which displays strand exchange activity. The polypeptide is Alkaline nuclease (Homo sapiens (Human)).